Consider the following 501-residue polypeptide: L-ornithine N(5)-monooxygenase (501 aa).

Low complexity predominate over residues 1–16 (MNGTSTTGNGFTNGTN). Residues 1-40 (MNGTSTTGNGFTNGTNYPVPKLELQPETTSTSPTRAQTHP) are disordered. Polar residues predominate over residues 26 to 37 (PETTSTSPTRAQ). Residues 92 to 100 (EKQSNFAWH) and glutamine 111 each bind FAD. Substrate is bound at residue lysine 116. An FAD-binding site is contributed by valine 177. Position 263 to 266 (263 to 266 (SGQS)) interacts with NADP(+). Residues 304–307 (NELF) and asparagine 334 contribute to the substrate site. 334-336 (NYS) is an NADP(+) binding site. 476 to 478 (SLL) lines the FAD pocket. Serine 479 serves as a coordination point for substrate.

It belongs to the lysine N(6)-hydroxylase/L-ornithine N(5)-oxygenase family. In terms of assembly, homotetramer. FAD is required as a cofactor.

It carries out the reaction L-ornithine + NADPH + O2 = N(5)-hydroxy-L-ornithine + NADP(+) + H2O. The catalysed reaction is L-ornithine + NADH + O2 = N(5)-hydroxy-L-ornithine + NAD(+) + H2O. It functions in the pathway siderophore biosynthesis. Its function is as follows. L-ornithine N(5)-monooxygenase; part of the siderophore biosynthetic pathway. Arthroderma benhamiae produces 2 types of extracellular siderophores, ferrichrome C and ferricrocin. The biosynthesis of these siderophores depends on the hydroxylation of ornithine to N(5)-hydroxyornithine, catalyzed by the monooxygenase sidA. The structure of ferricrocin differs from ferrichrome C only by a serine for alanine substitution and the assembly of both siderophores is suggested to be performed by the nonribosomal peptide synthase (NRPS) sidC. In Arthroderma benhamiae (strain ATCC MYA-4681 / CBS 112371) (Trichophyton mentagrophytes), this protein is L-ornithine N(5)-monooxygenase.